Here is a 546-residue protein sequence, read N- to C-terminus: Chaperonin GroEL (546 aa).

ATP contacts are provided by residues 29–32 (TLGP), K50, 86–90 (DGTTT), G414, 477–479 (NAL), and D493.

It belongs to the chaperonin (HSP60) family. As to quaternary structure, forms a cylinder of 14 subunits composed of two heptameric rings stacked back-to-back. Interacts with the co-chaperonin GroES.

It localises to the cytoplasm. It catalyses the reaction ATP + H2O + a folded polypeptide = ADP + phosphate + an unfolded polypeptide.. Its function is as follows. Together with its co-chaperonin GroES, plays an essential role in assisting protein folding. The GroEL-GroES system forms a nano-cage that allows encapsulation of the non-native substrate proteins and provides a physical environment optimized to promote and accelerate protein folding. In Leptospira interrogans serogroup Icterohaemorrhagiae serovar Lai (strain 56601), this protein is Chaperonin GroEL.